The chain runs to 60 residues: Large ribosomal subunit protein bL32 (60 aa).

Belongs to the bacterial ribosomal protein bL32 family.

The chain is Large ribosomal subunit protein bL32 from Streptococcus equi subsp. zooepidemicus (strain MGCS10565).